A 303-amino-acid polypeptide reads, in one-letter code: Vesicle-trafficking protein SEC22c (303 aa).

Residues 1–183 (MSVIFFACVV…EPAPNFRMEP (183 aa)) lie on the Cytoplasmic side of the membrane. The region spanning 8-119 (CVVRVRDGLP…YAFLEFDSII (112 aa)) is the Longin domain. A helical transmembrane segment spans residues 184–204 (VTALGILSLILNIMCAALNLI). Over 205–223 (RGVHLAEHSLQVAHEEIGN) the chain is Lumenal. Residues 224-244 (ILAFLVPFVACIFQCYLYLFY) traverse the membrane as a helical segment. The Cytoplasmic portion of the chain corresponds to 245–248 (SPAR). The helical transmembrane segment at 249–269 (TMKVVLMLLFICLGNMYLHGL) threads the bilayer. R270 is a topological domain (lumenal). Residues 271 to 291 (NLWQILFHIGVAFLSSYQILT) form a helical membrane-spanning segment. At 292 to 303 (RQLQEKQSDCGV) the chain is on the cytoplasmic side.

Belongs to the synaptobrevin family. Ubiquitously expressed.

It localises to the endoplasmic reticulum membrane. Functionally, may be involved in vesicle transport between the ER and the Golgi complex. The sequence is that of Vesicle-trafficking protein SEC22c (SEC22C) from Homo sapiens (Human).